We begin with the raw amino-acid sequence, 134 residues long: Profilin-3 (134 aa).

Cys13 and Cys118 are disulfide-bonded. Positions 84-100 match the Involved in PIP2 interaction motif; sequence AVIRGKKGSGGITIKKT. Phosphothreonine is present on Thr114.

Belongs to the profilin family. In terms of assembly, occurs in many kinds of cells as a complex with monomeric actin in a 1:1 ratio. In terms of processing, phosphorylated by MAP kinases.

The protein resides in the cytoplasm. Its subcellular location is the cytoskeleton. Its function is as follows. Binds to actin and affects the structure of the cytoskeleton. At high concentrations, profilin prevents the polymerization of actin, whereas it enhances it at low concentrations. This chain is Profilin-3, found in Olea europaea (Common olive).